A 346-amino-acid polypeptide reads, in one-letter code: Very-long-chain 3-oxoacyl-CoA reductase (346 aa).

Residues 26-46 (SAYFLLAAGSLFVASRALTFV) traverse the membrane as a helical segment. The NADP(+) site is built by V71, D126, D134, N153, Y220, K224, I253, and S255. Residue Y220 is the Proton donor of the active site. Residue K224 is the Lowers pKa of active site Tyr of the active site.

Belongs to the short-chain dehydrogenases/reductases (SDR) family.

The protein resides in the endoplasmic reticulum membrane. It carries out the reaction a very-long-chain (3R)-3-hydroxyacyl-CoA + NADP(+) = a very-long-chain 3-oxoacyl-CoA + NADPH + H(+). The protein operates within lipid metabolism; fatty acid biosynthesis. Functionally, component of the microsomal membrane bound fatty acid elongation system, which produces the 26-carbon very long-chain fatty acids (VLCFA) from palmitate. Catalyzes the reduction of the 3-ketoacyl-CoA intermediate that is formed in each cycle of fatty acid elongation. VLCFAs serve as precursors for ceramide and sphingolipids. In Aspergillus oryzae (strain ATCC 42149 / RIB 40) (Yellow koji mold), this protein is Very-long-chain 3-oxoacyl-CoA reductase.